Here is a 132-residue protein sequence, read N- to C-terminus: Small ribosomal subunit protein uS8c (132 aa).

Belongs to the universal ribosomal protein uS8 family. In terms of assembly, part of the 30S ribosomal subunit.

The protein resides in the plastid. The protein localises to the chloroplast. Functionally, one of the primary rRNA binding proteins, it binds directly to 16S rRNA central domain where it helps coordinate assembly of the platform of the 30S subunit. The protein is Small ribosomal subunit protein uS8c (rps8) of Adiantum capillus-veneris (Maidenhair fern).